A 551-amino-acid polypeptide reads, in one-letter code: Chaperonin GroEL 2 (551 aa).

ATP is bound by residues 30 to 33, K51, 87 to 91, G415, and D496; these read TLGP and DGTTT.

Belongs to the chaperonin (HSP60) family. Forms a cylinder of 14 subunits composed of two heptameric rings stacked back-to-back. Interacts with the co-chaperonin GroES.

It is found in the cytoplasm. It carries out the reaction ATP + H2O + a folded polypeptide = ADP + phosphate + an unfolded polypeptide.. Functionally, together with its co-chaperonin GroES, plays an essential role in assisting protein folding. The GroEL-GroES system forms a nano-cage that allows encapsulation of the non-native substrate proteins and provides a physical environment optimized to promote and accelerate protein folding. This is Chaperonin GroEL 2 from Rhodopseudomonas palustris (strain BisB18).